The sequence spans 345 residues: MASFIKAWGLVIISLCYTFFIAKLVPKGIKRLILFFPVFLIFFIVPFLIYSLHLLGITAFFIAWLANFKLLLFALGRGPLSSNHKPLSLPIFLAVSCLPIKIQLSPKPTKTHSHEGSTEGPLIYTIKAVFVVLIIKAYEYSTKLPEKVVLTLYAIHIYFALEIILAATAAAVRAMSDLELEPQFNKPYLATSLQDFWGRRWNLMVTGILRPTVYEPSLQLFSVLGPNYSQILAAFGTFVVSGIMHELIFFYMGRLRPDWKMMWFFLINGFCTTVEIAIKKTINGRWRFPKAISQVLTLTFVMVTALWLFLPEFNRCNIVEKALDEYAAIGAFAVEVRRKLTAYLF.

The next 9 membrane-spanning stretches (helical) occupy residues 1 to 21 (MASF…TFFI), 32 to 52 (LILF…IYSL), 54 to 74 (LLGI…LLFA), 86 to 106 (PLSL…QLSP), 120 to 140 (GPLI…AYEY), 148 to 168 (VVLT…LAAT), 231 to 251 (ILAA…IFFY), 258 to 278 (DWKM…EIAI), and 291 to 311 (AISQ…LFLP).

The protein belongs to the wax synthase family.

It is found in the membrane. Its function is as follows. Involved in the esterification of cycloartenol. Not implicated in the formation of sterol esters in flowers or during seed maturation. Has a substrate preference toward saturated fatty acyl donors (16:0 &gt; 18:0 &gt; 16:1 &gt; 18:1). Does not require triacyglycerols (TAGs) as a fatty acyl donor, and is unable to acylate diacylglycerol to produce TAG. This Arabidopsis thaliana (Mouse-ear cress) protein is Acyl-CoA--sterol O-acyltransferase 1 (ASAT1).